The primary structure comprises 306 residues: Ribonuclease Z (306 aa).

Histidine 62, histidine 64, aspartate 66, histidine 67, histidine 138, aspartate 209, and histidine 267 together coordinate Zn(2+). Catalysis depends on aspartate 66, which acts as the Proton acceptor.

It belongs to the RNase Z family. As to quaternary structure, homodimer. Requires Zn(2+) as cofactor.

It catalyses the reaction Endonucleolytic cleavage of RNA, removing extra 3' nucleotides from tRNA precursor, generating 3' termini of tRNAs. A 3'-hydroxy group is left at the tRNA terminus and a 5'-phosphoryl group is left at the trailer molecule.. Functionally, zinc phosphodiesterase, which displays some tRNA 3'-processing endonuclease activity. Probably involved in tRNA maturation, by removing a 3'-trailer from precursor tRNA. The sequence is that of Ribonuclease Z from Archaeoglobus fulgidus (strain ATCC 49558 / DSM 4304 / JCM 9628 / NBRC 100126 / VC-16).